A 758-amino-acid polypeptide reads, in one-letter code: Protein hunchback (758 aa).

Disordered regions lie at residues 30 to 51 and 172 to 214; these read EPGH…PIPS and EKLQ…EDMK. Over residues 39–51 the composition is skewed to polar residues; it reads SVASSPRQSPIPS. T178 carries the phosphothreonine modification. Phosphoserine is present on residues S188, S207, S209, and S210. Residues 198 to 214 are compositionally biased toward basic and acidic residues; sequence EPEKEHDQMSNSSEDMK. 4 consecutive C2H2-type zinc fingers follow at residues 240-262, 269-291, 297-319, and 325-349; these read YKCK…TRTH, LQCP…IRKH, FQCD…RKSH, and YRCA…KYGH. 2 disordered regions span residues 365-416 and 513-536; these read LVID…PVAT and QLQQ…YERK. 2 stretches are compositionally biased toward low complexity: residues 398–415 and 513–522; these read VAAV…QPVA and QLQQQNQQQS. Residues 523 to 532 are compositionally biased toward acidic residues; the sequence is DNEEEEQDDE. A phosphoserine mark is found at S537 and S540. A disordered region spans residues 603 to 695; sequence MTSPEQLKVP…TTSAVAAPPS (93 aa). Over residues 652–695 the composition is skewed to low complexity; that stretch reads ANTSASSTASSSGNSSNASSNSNGNSSSNSSSNGTTSAVAAPPS. 2 consecutive C2H2-type zinc fingers follow at residues 705–727 and 733–757; these read YECK…MGYH and FKCN…RNAH.

Belongs to the hunchback C2H2-type zinc-finger protein family. In terms of tissue distribution, in embryo, expression of maternal transcript is highest in anterior region. Zygotic transcript is expressed in anterior region until the beginning of gastrulation and in posterior region until early gastrulation. After this, it is expressed in developing nervous system.

Its subcellular location is the nucleus. In terms of biological role, gap class segmentation protein that controls development of head structures. The chain is Protein hunchback from Drosophila melanogaster (Fruit fly).